Here is a 420-residue protein sequence, read N- to C-terminus: C-methyltransferase NovU (420 aa).

Belongs to the methyltransferase superfamily.

The protein operates within antibiotic biosynthesis; novobiocin biosynthesis. C-methyltransferase that acts together with NovW to catalyze the formation of dTDP-4-keto-6-deoxy-5-C-methyl-L-lyxo-hexose from dTDP-4-keto-6-deoxy-D-glucose in the novobiocin biosynthesis pathway, an aminocoumarin family antibiotic that targets bacterial DNA gyrases. The chain is C-methyltransferase NovU (novU) from Streptomyces niveus (Streptomyces spheroides).